The following is an 866-amino-acid chain: Glycoprotein gp2 (866 aa).

The signal sequence occupies residues 1-25; the sequence is MGFIYARKLLLCMAVSIYAIGSTTT. Disordered regions lie at residues 24-185 and 319-619; these read TTTE…TDTT and TAAT…IVPQ. Residue Asn-48 is glycosylated (N-linked (GlcNAc...) asparagine; by host). A compositionally biased stretch (low complexity) spans 319–442; sequence TAATTTAATT…PDSSTGSTST (124 aa). Residues 443-463 are compositionally biased toward polar residues; that stretch reads AEPSSTFTLTPSTATPSTDQF. Composition is skewed to low complexity over residues 464–499 and 514–526; these read TGSS…EAST and TPDG…NTTP. The N-linked (GlcNAc...) asparagine; by host glycan is linked to Asn-518. The span at 535 to 561 shows a compositional bias: polar residues; sequence FADTQQTPDNGVSTQHTTINDHTTANA. A compositionally biased stretch (basic residues) spans 564-574; it reads HAGHHRGRAGG. N-linked (GlcNAc...) asparagine; by host glycosylation is found at Asn-611 and Asn-659. Residues 835–855 form a helical membrane-spanning segment; that stretch reads FALVAATTLTVTILCLLCCLY.

The protein localises to the virion membrane. Functionally, virulence factor. This is Glycoprotein gp2 from Equus caballus (Horse).